Reading from the N-terminus, the 347-residue chain is MNSPDLWYSPETQFCFAAANNSCPRKARPALVVCAMYLVMIGAIVMTMLGNMVVIISIAHFKQLHSPTNFLILSMATTDFLLSCVVMPFSMVRSIESCWYFGDLFCKVHSCCDIMLCTTSIFHLCFISVDRHYAVCDPLHYVTQITVGVVGVFLLISWSVPILFAFGLVFSELNLIGAEDFVAAIDCTGLCVLIFNKLWGVLASFIAFFLPGAIMVGIYIHIFTVARKHARKIGPGPRTKRALSESKMKATSGKESKATKTLSIVMGVFVLCWLPFFVLTITDPFIGFTTPEDLYNVFLWLGYFNSTFNPIIYGMFYPWFRKALRMIVTGTIFRSDSSTSSLHPAHP.

At 1-37 (MNSPDLWYSPETQFCFAAANNSCPRKARPALVVCAMY) the chain is on the extracellular side. Residue Asn20 is glycosylated (N-linked (GlcNAc...) asparagine). Cystine bridges form between Cys23–Cys187 and Cys106–Cys191. A helical transmembrane segment spans residues 38–58 (LVMIGAIVMTMLGNMVVIISI). The Cytoplasmic segment spans residues 59–69 (AHFKQLHSPTN). A helical transmembrane segment spans residues 70 to 90 (FLILSMATTDFLLSCVVMPFS). Over 91–110 (MVRSIESCWYFGDLFCKVHS) the chain is Extracellular. Residues 111–129 (CCDIMLCTTSIFHLCFISV) traverse the membrane as a helical segment. Residues 130 to 149 (DRHYAVCDPLHYVTQITVGV) lie on the Cytoplasmic side of the membrane. Residues 150 to 170 (VGVFLLISWSVPILFAFGLVF) traverse the membrane as a helical segment. At 171–197 (SELNLIGAEDFVAAIDCTGLCVLIFNK) the chain is on the extracellular side. The segment at 175–188 (LIGAEDFVAAIDCT) is extracellular Loop 2 (ECL2). A helical transmembrane segment spans residues 198–218 (LWGVLASFIAFFLPGAIMVGI). Topologically, residues 219–260 (YIHIFTVARKHARKIGPGPRTKRALSESKMKATSGKESKATK) are cytoplasmic. Residues 261 to 281 (TLSIVMGVFVLCWLPFFVLTI) traverse the membrane as a helical segment. The Extracellular segment spans residues 282 to 296 (TDPFIGFTTPEDLYN). Residues 297–317 (VFLWLGYFNSTFNPIIYGMFY) form a helical membrane-spanning segment. Residues 318-347 (PWFRKALRMIVTGTIFRSDSSTSSLHPAHP) are Cytoplasmic-facing.

It belongs to the G-protein coupled receptor 1 family.

The protein localises to the cell membrane. Functionally, olfactory receptor specific for 2-phenylethylamine, a trace amine present at high concentration in the urine of carnivore species, playing a key role in fear and avoidance responses. 2-phenylethylamine acts as a kairomone in the chemical detection of carnivore odor and triggers fear in rats. This receptor is probably mediated by the G(s)-class of G-proteins which activate adenylate cyclase. The polypeptide is Trace amine-associated receptor 4 (Rattus norvegicus (Rat)).